The chain runs to 468 residues: Secreted triacylglycerol lipase LIP7 (468 aa).

An N-terminal signal peptide occupies residues 1 to 21; the sequence is MFPRQILVFAALGLCFALVAG. Cys125 and Cys295 form a disulfide bridge. The Nucleophile role is filled by Ser209. Residues Asp355 and His389 contribute to the active site.

Belongs to the AB hydrolase superfamily. Lipase family. Class Lip subfamily.

It localises to the secreted. It is found in the cell wall. The catalysed reaction is a triacylglycerol + H2O = a diacylglycerol + a fatty acid + H(+). It catalyses the reaction a monoacylglycerol + H2O = glycerol + a fatty acid + H(+). The enzyme catalyses a diacylglycerol + H2O = a monoacylglycerol + a fatty acid + H(+). Secreted lipase involved in Dandruff and seborrheic dermatitis (D/SD) probably via lipase-mediated breakdown of sebaceous lipids and release of irritating free fatty acids. Has triacylglycerol lipase activity and is able to hydrolyze triolein. Mostly converts monoolein to di- and triolein, while free fatty acids are only produced in low amounts. The protein is Secreted triacylglycerol lipase LIP7 of Malassezia globosa (strain ATCC MYA-4612 / CBS 7966) (Dandruff-associated fungus).